A 256-amino-acid chain; its full sequence is Hydroxyacylglutathione hydrolase (256 aa).

H55, H57, D59, H60, H113, D132, and H170 together coordinate Zn(2+).

It belongs to the metallo-beta-lactamase superfamily. Glyoxalase II family. As to quaternary structure, monomer. It depends on Zn(2+) as a cofactor.

The enzyme catalyses an S-(2-hydroxyacyl)glutathione + H2O = a 2-hydroxy carboxylate + glutathione + H(+). The protein operates within secondary metabolite metabolism; methylglyoxal degradation; (R)-lactate from methylglyoxal: step 2/2. Thiolesterase that catalyzes the hydrolysis of S-D-lactoyl-glutathione to form glutathione and D-lactic acid. The sequence is that of Hydroxyacylglutathione hydrolase from Methylococcus capsulatus (strain ATCC 33009 / NCIMB 11132 / Bath).